Reading from the N-terminus, the 377-residue chain is MSMSPTVIILACLGFFLDQSVWAHVGGQDKPFCSAWPSAVVPQGGHVTLRCHYRRGFNIFTLYKKDGVPVPELYNRIFWNSFLISPVTPAHAGTYRCRGFHPHSPTEWSAPSNPLVIMVTGLYEKPSLTARPGPTVRAGENVTLSCSSQSSFDIYHLSREGEAHELRLPAVPSINGTFQADFPLGPATHGETYRCFGSFHGSPYEWSDPSDPLPVSVTGNPSSSWPSPTEPSFKTGIARHLHAVIRYSVAIILFTILPFFLLHRWCSKKKDAAVMNQEPAGHRTVNREDSDEQDPQEVTYAQLDHCIFTQRKITGPSQRSKRPSTDTSVCIELPNAEPRALSPAHEHHSQALMGSSRETTALSQTQLASSNVPAAGI.

The N-terminal stretch at 1 to 21 is a signal peptide; that stretch reads MSMSPTVIILACLGFFLDQSV. At 22–242 the chain is on the extracellular side; the sequence is WAHVGGQDKP…FKTGIARHLH (221 aa). Ig-like C2-type domains are found at residues 44–104 and 139–202; these read GGHV…HPHS and GENV…FHGS. C51 and C97 form a disulfide bridge. N-linked (GlcNAc...) asparagine glycosylation is found at N141 and N175. An intrachain disulfide couples C146 to C195. A helical transmembrane segment spans residues 243 to 263; the sequence is AVIRYSVAIILFTILPFFLLH. At 264-377 the chain is on the cytoplasmic side; it reads RWCSKKKDAA…ASSNVPAAGI (114 aa). The disordered stretch occupies residues 338-377; sequence PRALSPAHEHHSQALMGSSRETTALSQTQLASSNVPAAGI. The span at 352-377 shows a compositional bias: polar residues; sequence LMGSSRETTALSQTQLASSNVPAAGI.

The protein belongs to the immunoglobulin superfamily. As to quaternary structure, interacts with peptide-bound HLA-G-B2M heterotrimeric complex. Interacts with ARRB2. Expressed in decidual NK cells and innate lymphoid cell type I (ILC1). Expressed in a subset of peripheral NK cells.

It is found in the cell membrane. Its subcellular location is the early endosome membrane. In terms of biological role, receptor for non-classical major histocompatibility class Ib HLA-G molecules. Recognizes HLA-G in complex with B2M/beta-2 microglobulin and a nonamer self-peptide (peptide-bound HLA-G-B2M). In decidual NK cells, binds peptide-bound HLA-G-B2M complex and triggers NK cell senescence-associated secretory phenotype as a molecular switch to promote vascular remodeling and fetal growth in early pregnancy. May play a role in balancing tolerance and antiviral-immunity at maternal-fetal interface by keeping in check the effector functions of NK, CD8+ T cells and B cells. Upon interaction with peptide-bound HLA-G-B2M, initiates signaling from the endosomal compartment leading to downstream activation of PRKDC-XRCC5 and AKT1, and ultimately triggering NF-kappa-B-dependent pro-inflammatory response. The chain is Killer cell immunoglobulin-like receptor 2DL4 from Homo sapiens (Human).